The following is a 623-amino-acid chain: UvrABC system protein C (623 aa).

The GIY-YIG domain maps to Asp13–Ile92. The UVR domain occupies Asn204–Val239.

This sequence belongs to the UvrC family. In terms of assembly, interacts with UvrB in an incision complex.

The protein localises to the cytoplasm. Its function is as follows. The UvrABC repair system catalyzes the recognition and processing of DNA lesions. UvrC both incises the 5' and 3' sides of the lesion. The N-terminal half is responsible for the 3' incision and the C-terminal half is responsible for the 5' incision. The protein is UvrABC system protein C of Clostridium acetobutylicum (strain ATCC 824 / DSM 792 / JCM 1419 / IAM 19013 / LMG 5710 / NBRC 13948 / NRRL B-527 / VKM B-1787 / 2291 / W).